The primary structure comprises 393 residues: NAD(P)H-quinone oxidoreductase subunit H, chloroplastic (393 aa).

It belongs to the complex I 49 kDa subunit family. NDH is composed of at least 16 different subunits, 5 of which are encoded in the nucleus.

It localises to the plastid. It is found in the chloroplast thylakoid membrane. The catalysed reaction is a plastoquinone + NADH + (n+1) H(+)(in) = a plastoquinol + NAD(+) + n H(+)(out). It carries out the reaction a plastoquinone + NADPH + (n+1) H(+)(in) = a plastoquinol + NADP(+) + n H(+)(out). Functionally, NDH shuttles electrons from NAD(P)H:plastoquinone, via FMN and iron-sulfur (Fe-S) centers, to quinones in the photosynthetic chain and possibly in a chloroplast respiratory chain. The immediate electron acceptor for the enzyme in this species is believed to be plastoquinone. Couples the redox reaction to proton translocation, and thus conserves the redox energy in a proton gradient. This chain is NAD(P)H-quinone oxidoreductase subunit H, chloroplastic, found in Saccharum hybrid (Sugarcane).